The sequence spans 335 residues: Tetraacyldisaccharide 4'-kinase (335 aa).

58 to 65 (TVGGSGKT) contacts ATP.

It belongs to the LpxK family.

The catalysed reaction is a lipid A disaccharide + ATP = a lipid IVA + ADP + H(+). The protein operates within glycolipid biosynthesis; lipid IV(A) biosynthesis; lipid IV(A) from (3R)-3-hydroxytetradecanoyl-[acyl-carrier-protein] and UDP-N-acetyl-alpha-D-glucosamine: step 6/6. Its function is as follows. Transfers the gamma-phosphate of ATP to the 4'-position of a tetraacyldisaccharide 1-phosphate intermediate (termed DS-1-P) to form tetraacyldisaccharide 1,4'-bis-phosphate (lipid IVA). The sequence is that of Tetraacyldisaccharide 4'-kinase from Shewanella sp. (strain MR-4).